Consider the following 774-residue polypeptide: Protein translocase subunit SecA (774 aa).

ATP contacts are provided by residues Gln66, 84–88 (GEGKS), and Asp474.

It belongs to the SecA family.

The protein resides in the plastid. It is found in the chloroplast stroma. It localises to the chloroplast thylakoid membrane. It carries out the reaction ATP + H2O + cellular proteinSide 1 = ADP + phosphate + cellular proteinSide 2.. Functionally, has a central role in coupling the hydrolysis of ATP to the transfer of proteins across the thylakoid membrane. The polypeptide is Protein translocase subunit SecA (Cyanidioschyzon merolae (strain NIES-3377 / 10D) (Unicellular red alga)).